A 92-amino-acid polypeptide reads, in one-letter code: Subtilisin inhibitor 1 (92 aa).

Positions 1-12 (QEQGTNPSQEQN) are enriched in polar residues. The segment at 1 to 31 (QEQGTNPSQEQNVPLPRNYKQALETNTPTKT) is disordered.

This sequence belongs to the protease inhibitor I13 (potato type I serine protease inhibitor) family.

Inhibitor of subtilisin. The protein is Subtilisin inhibitor 1 of Phaseolus angularis (Azuki bean).